The following is an 80-amino-acid chain: MKNNINLQDVFLNQVRKENIGITIFLVNGFQLKGFVRGFDNYTIVLDSDGKQQMIYKHAVSTISPNSPVNFSAALKKIND.

Positions 9–69 constitute a Sm domain; the sequence is DVFLNQVRKE…VSTISPNSPV (61 aa).

Belongs to the Hfq family. In terms of assembly, homohexamer.

In terms of biological role, RNA chaperone that binds small regulatory RNA (sRNAs) and mRNAs to facilitate mRNA translational regulation in response to envelope stress, environmental stress and changes in metabolite concentrations. Also binds with high specificity to tRNAs. This is RNA-binding protein Hfq from Alkaliphilus oremlandii (strain OhILAs) (Clostridium oremlandii (strain OhILAs)).